Reading from the N-terminus, the 131-residue chain is Cilia- and flagella-associated protein 144 (131 aa).

The segment at Thr79 to Leu99 is disordered. Positions Glu84 to Leu99 are enriched in polar residues.

Belongs to the CFAP144 family. In terms of tissue distribution, expressed in choroid plexus (at protein level). Expressed by motile ciliated cells in choroid plexus.

It localises to the cytoplasm. It is found in the cytoskeleton. The protein localises to the cilium axoneme. Its subcellular location is the flagellum axoneme. Functionally, microtubule inner protein (MIP) part of the dynein-decorated doublet microtubules (DMTs) in cilia axoneme, which is required for motile cilia beating. The sequence is that of Cilia- and flagella-associated protein 144 (CFAP144) from Gallus gallus (Chicken).